Here is a 507-residue protein sequence, read N- to C-terminus: Glycerol kinase 2 (507 aa).

Thr16 contacts ADP. 3 residues coordinate ATP: Thr16, Thr17, and Ser18. Sn-glycerol 3-phosphate is bound at residue Thr16. Arg20 serves as a coordination point for ADP. 4 residues coordinate sn-glycerol 3-phosphate: Arg86, Glu87, Tyr138, and Asp248. Residues Arg86, Glu87, Tyr138, Asp248, and Gln249 each contribute to the glycerol site. Thr270 and Gly314 together coordinate ADP. ATP-binding residues include Thr270, Gly314, Gln318, and Gly415. ADP is bound by residues Gly415 and Asn419.

This sequence belongs to the FGGY kinase family.

It carries out the reaction glycerol + ATP = sn-glycerol 3-phosphate + ADP + H(+). It participates in polyol metabolism; glycerol degradation via glycerol kinase pathway; sn-glycerol 3-phosphate from glycerol: step 1/1. With respect to regulation, inhibited by fructose 1,6-bisphosphate (FBP). Functionally, key enzyme in the regulation of glycerol uptake and metabolism. Catalyzes the phosphorylation of glycerol to yield sn-glycerol 3-phosphate. In Streptomyces avermitilis (strain ATCC 31267 / DSM 46492 / JCM 5070 / NBRC 14893 / NCIMB 12804 / NRRL 8165 / MA-4680), this protein is Glycerol kinase 2.